The following is a 276-amino-acid chain: Kallikrein-10 (276 aa).

An N-terminal signal peptide occupies residues 1–30 (MRAPHLHLSAASGARALAKLLPLLMAQLWA). Asn-39 carries an N-linked (GlcNAc...) asparagine glycan. In terms of domain architecture, Peptidase S1 spans 47–274 (AYGSPCARGS…YMSWINKVIR (228 aa)). Disulfide bonds link Cys-52–Cys-162, Cys-71–Cys-87, Cys-169–Cys-235, Cys-201–Cys-215, and Cys-225–Cys-250. Catalysis depends on charge relay system residues His-86 and Asp-137. Residue Ser-229 is the Charge relay system of the active site.

It belongs to the peptidase S1 family. Kallikrein subfamily. As to expression, expressed in breast, ovary and prostate.

The protein resides in the secreted. Has a tumor-suppressor role for NES1 in breast and prostate cancer. The sequence is that of Kallikrein-10 (KLK10) from Homo sapiens (Human).